The primary structure comprises 134 residues: Large ribosomal subunit protein uL16c (134 aa).

Residues 1–22 form a disordered region; it reads MLSPKRTRFRKQHRGRMKGISH.

The protein belongs to the universal ribosomal protein uL16 family. As to quaternary structure, part of the 50S ribosomal subunit.

The protein resides in the plastid. It is found in the chloroplast. The protein is Large ribosomal subunit protein uL16c of Nicotiana tabacum (Common tobacco).